Here is a 150-residue protein sequence, read N- to C-terminus: D-aminoacyl-tRNA deacylase (150 aa).

The Gly-cisPro motif, important for rejection of L-amino acids motif lies at Gly-138–Pro-139.

The protein belongs to the DTD family. In terms of assembly, homodimer.

The protein resides in the cytoplasm. It carries out the reaction glycyl-tRNA(Ala) + H2O = tRNA(Ala) + glycine + H(+). It catalyses the reaction a D-aminoacyl-tRNA + H2O = a tRNA + a D-alpha-amino acid + H(+). In terms of biological role, an aminoacyl-tRNA editing enzyme that deacylates mischarged D-aminoacyl-tRNAs. Also deacylates mischarged glycyl-tRNA(Ala), protecting cells against glycine mischarging by AlaRS. Acts via tRNA-based rather than protein-based catalysis; rejects L-amino acids rather than detecting D-amino acids in the active site. By recycling D-aminoacyl-tRNA to D-amino acids and free tRNA molecules, this enzyme counteracts the toxicity associated with the formation of D-aminoacyl-tRNA entities in vivo and helps enforce protein L-homochirality. This Parabacteroides distasonis (strain ATCC 8503 / DSM 20701 / CIP 104284 / JCM 5825 / NCTC 11152) protein is D-aminoacyl-tRNA deacylase.